Here is a 182-residue protein sequence, read N- to C-terminus: Helofensin-3 (182 aa).

The signal sequence occupies residues 1 to 26; sequence MQMDWLFIAVISGIGLLSSGVPGTQG. A C(6)C(4)C(9)C(6)CC 1; approximate repeat occupies 27–64; that stretch reads AYTTEQCRALNGSCNFYACFPKNVIIGKCDWWGWSCCA. A C(6)C(4)C(9)C(6)CC 2; approximate repeat occupies 65-101; the sequence is RTPLERCTAKKGTCTKTGCTKTDTDHGPCDGGAQCCQ. The stretch at 102–138 is one C(6)C(4)C(9)C(6)CC 3; approximate repeat; that stretch reads RDPVKYCKFHGNVCGRGKCPMDHIPIGECTPGYPCCK. Residues 139 to 176 form a C(6)C(4)C(9)C(6)CC 4; approximate repeat; the sequence is RDGPAYCKSKGGKCLNRCPQIVPTNVIGVCATGVPCCK.

This sequence belongs to the beta-defensin family. Helofensin subfamily. Expressed by the mandibular venom gland.

The protein resides in the secreted. Functionally, lethal toxin which possesses an inhibitory effect on direct electrical stimulation of the isolated hemi-diaphragm of mice. Neither hemorrhagic nor hemolytic activities are detected. Phospholipase A2 activity, proteolytic activity and arginine esterolytic activity are absent. In Heloderma suspectum cinctum (Banded Gila monster), this protein is Helofensin-3.